The following is a 432-amino-acid chain: Adenylosuccinate synthetase (432 aa).

GTP-binding positions include Gly-13 to Lys-19 and Gly-41 to Thr-43. Catalysis depends on Asp-14, which acts as the Proton acceptor. Mg(2+) contacts are provided by Asp-14 and Gly-41. IMP is bound by residues Asp-14–Lys-17, Asn-39–His-42, Thr-130, Arg-144, Gln-225, Thr-240, and Arg-304. His-42 acts as the Proton donor in catalysis. Ser-300–Arg-306 contributes to the substrate binding site. Residues Arg-306, Lys-332–Asp-334, and Ser-416–Gly-418 contribute to the GTP site.

This sequence belongs to the adenylosuccinate synthetase family. Homodimer. Requires Mg(2+) as cofactor.

It localises to the cytoplasm. The enzyme catalyses IMP + L-aspartate + GTP = N(6)-(1,2-dicarboxyethyl)-AMP + GDP + phosphate + 2 H(+). The protein operates within purine metabolism; AMP biosynthesis via de novo pathway; AMP from IMP: step 1/2. Its function is as follows. Plays an important role in the de novo pathway of purine nucleotide biosynthesis. Catalyzes the first committed step in the biosynthesis of AMP from IMP. The sequence is that of Adenylosuccinate synthetase from Nitrosomonas eutropha (strain DSM 101675 / C91 / Nm57).